The sequence spans 393 residues: tRNA(Met) cytidine acetate ligase (393 aa).

Glycine 81, asparagine 142, and arginine 167 together coordinate ATP.

This sequence belongs to the TmcAL family.

Its subcellular location is the cytoplasm. The enzyme catalyses cytidine(34) in elongator tRNA(Met) + acetate + ATP = N(4)-acetylcytidine(34) in elongator tRNA(Met) + AMP + diphosphate. Catalyzes the formation of N(4)-acetylcytidine (ac(4)C) at the wobble position of elongator tRNA(Met), using acetate and ATP as substrates. First activates an acetate ion to form acetyladenylate (Ac-AMP) and then transfers the acetyl group to tRNA to form ac(4)C34. In Bacillus cereus (strain 03BB102), this protein is tRNA(Met) cytidine acetate ligase.